A 1102-amino-acid chain; its full sequence is PAN2-PAN3 deadenylation complex catalytic subunit PAN2 (1102 aa).

WD repeat units lie at residues 20–59 (DYPRPATALAFDTIAELLWAGNDRGRVVSFYGRDLQRYTA), 104–144 (DEME…IVKQ), and 269–308 (NVMSFINLFEIAPSGEALAMADTECNIHLWGSPSKIHFTD). Residues 308-445 (DMAIPIEMPK…STDELESLKP (138 aa)) form a linker region. Positions 423 to 442 (AVPDPKVEQVPESSTDELES) are disordered. A USP domain is found at 446-833 (EAPPIYRNLE…LPAVLLFQVK (388 aa)). The region spanning 881–1054 (VGLDTEFVSL…EDARTALKLY (174 aa)) is the Exonuclease domain. Residues Asp-884, Glu-886, Asp-993, and Asp-1046 each contribute to the a divalent metal cation site.

The protein belongs to the peptidase C19 family. PAN2 subfamily. Forms a heterotrimer with an asymmetric homodimer of the regulatory subunit PAN3 to form the poly(A)-nuclease (PAN) deadenylation complex. The cofactor is a divalent metal cation.

It localises to the cytoplasm. It catalyses the reaction Exonucleolytic cleavage of poly(A) to 5'-AMP.. With respect to regulation, positively regulated by the regulatory subunit PAN3. In terms of biological role, catalytic subunit of the poly(A)-nuclease (PAN) deadenylation complex, one of two cytoplasmic mRNA deadenylases involved in mRNA turnover. PAN specifically shortens poly(A) tails of RNA and the activity is stimulated by poly(A)-binding protein PAB1. PAN deadenylation is followed by rapid degradation of the shortened mRNA tails by the CCR4-NOT complex. Deadenylated mRNAs are then degraded by two alternative mechanisms, namely exosome-mediated 3'-5' exonucleolytic degradation, or deadenylation-dependent mRNA decaping and subsequent 5'-3' exonucleolytic degradation by XRN1. May also be involved in post-transcriptional maturation of mRNA poly(A) tails. In Chaetomium globosum (strain ATCC 6205 / CBS 148.51 / DSM 1962 / NBRC 6347 / NRRL 1970) (Soil fungus), this protein is PAN2-PAN3 deadenylation complex catalytic subunit PAN2.